A 420-amino-acid polypeptide reads, in one-letter code: uncharacterized protein (420 aa).

This is an uncharacterized protein from Encephalitozoon cuniculi (strain GB-M1) (Microsporidian parasite).